Here is a 110-residue protein sequence, read N- to C-terminus: Thiosulfate sulfurtransferase GlpE (110 aa).

In terms of domain architecture, Rhodanese spans K17–A105. The Cysteine persulfide intermediate role is filled by C65.

The protein belongs to the GlpE family.

The protein localises to the cytoplasm. It catalyses the reaction thiosulfate + hydrogen cyanide = thiocyanate + sulfite + 2 H(+). It carries out the reaction thiosulfate + [thioredoxin]-dithiol = [thioredoxin]-disulfide + hydrogen sulfide + sulfite + 2 H(+). In terms of biological role, transferase that catalyzes the transfer of sulfur from thiosulfate to thiophilic acceptors such as cyanide or dithiols. May function in a CysM-independent thiosulfate assimilation pathway by catalyzing the conversion of thiosulfate to sulfite, which can then be used for L-cysteine biosynthesis. This is Thiosulfate sulfurtransferase GlpE from Pseudomonas putida (strain GB-1).